Here is a 465-residue protein sequence, read N- to C-terminus: Fumarate hydratase class II (465 aa).

Residues 99-101 (SGT), Arg-127, 130-133 (HPND), 140-142 (STN), and Thr-188 contribute to the substrate site. His-189 acts as the Proton donor/acceptor in catalysis. Ser-319 is a catalytic residue. Substrate contacts are provided by residues Ser-320 and 325-327 (KVN).

The protein belongs to the class-II fumarase/aspartase family. Fumarase subfamily. Homotetramer.

The protein localises to the cytoplasm. The enzyme catalyses (S)-malate = fumarate + H2O. Its pathway is carbohydrate metabolism; tricarboxylic acid cycle; (S)-malate from fumarate: step 1/1. Its function is as follows. Involved in the TCA cycle. Catalyzes the stereospecific interconversion of fumarate to L-malate. The protein is Fumarate hydratase class II of Parasynechococcus marenigrum (strain WH8102).